A 613-amino-acid chain; its full sequence is tRNA 5-methylaminomethyl-2-thiouridine biosynthesis bifunctional protein MnmC (613 aa).

The tRNA (mnm(5)s(2)U34)-methyltransferase stretch occupies residues 1–225; it reads MKKAKLIFKD…KREMIKAYLE (225 aa). Residues 252-613 form an FAD-dependent cmnm(5)s(2)U34 oxidoreductase region; it reads IGAGISSAVL…FLIRKLKKGL (362 aa).

This sequence in the N-terminal section; belongs to the methyltransferase superfamily. tRNA (mnm(5)s(2)U34)-methyltransferase family. It in the C-terminal section; belongs to the DAO family. Requires FAD as cofactor.

It is found in the cytoplasm. The catalysed reaction is 5-aminomethyl-2-thiouridine(34) in tRNA + S-adenosyl-L-methionine = 5-methylaminomethyl-2-thiouridine(34) in tRNA + S-adenosyl-L-homocysteine + H(+). In terms of biological role, catalyzes the last two steps in the biosynthesis of 5-methylaminomethyl-2-thiouridine (mnm(5)s(2)U) at the wobble position (U34) in tRNA. Catalyzes the FAD-dependent demodification of cmnm(5)s(2)U34 to nm(5)s(2)U34, followed by the transfer of a methyl group from S-adenosyl-L-methionine to nm(5)s(2)U34, to form mnm(5)s(2)U34. The protein is tRNA 5-methylaminomethyl-2-thiouridine biosynthesis bifunctional protein MnmC of Campylobacter jejuni subsp. jejuni serotype O:6 (strain 81116 / NCTC 11828).